The chain runs to 461 residues: Cysteine--tRNA ligase (461 aa).

Residue C29 participates in Zn(2+) binding. The 'HIGH' region motif lies at 31–41 (MTIYDLCHVGH). Zn(2+)-binding residues include C213, H238, and E242. Residues 274–278 (KMSKS) carry the 'KMSKS' region motif. K277 provides a ligand contact to ATP.

Belongs to the class-I aminoacyl-tRNA synthetase family. In terms of assembly, monomer. Zn(2+) serves as cofactor.

The protein localises to the cytoplasm. It catalyses the reaction tRNA(Cys) + L-cysteine + ATP = L-cysteinyl-tRNA(Cys) + AMP + diphosphate. This is Cysteine--tRNA ligase from Methylibium petroleiphilum (strain ATCC BAA-1232 / LMG 22953 / PM1).